The chain runs to 335 residues: Stearoyl-CoA desaturase 5 (335 aa).

The Cytoplasmic portion of the chain corresponds to 1–54 (MPGPAVDAEKVPFRSAKEEIRAGVGVEGSEGGGGGGGRERPGARGHRQDIVWRN). The disordered stretch occupies residues 24–44 (VGVEGSEGGGGGGGRERPGAR). Residues 25 to 36 (GVEGSEGGGGGG) show a composition bias toward gly residues. Asn-54 lines the substrate pocket. A helical transmembrane segment spans residues 55 to 75 (VFLMSLLHLAAVYSLVLIPKA). Residues 76-77 (QP) are Lumenal-facing. Residues 78 to 98 (LTLLWAYFCFLLTALGVTAGA) form a helical membrane-spanning segment. The Fe cation site is built by His-99 and His-104. The Histidine box-1 signature appears at 99-104 (HRLWSH). The Cytoplasmic portion of the chain corresponds to 99–198 (HRLWSHRSYK…VVRFQRKYYK (100 aa)). Asn-127, Arg-134, and Asp-135 together coordinate substrate. Fe cation is bound by residues His-136, His-139, and His-140. Residues 136–140 (HRVHH) carry the Histidine box-2 motif. Positions 167 and 168 each coordinate substrate. A helical membrane pass occupies residues 199–219 (ITVVLMCFVVPTLVPWYIWGE). Topologically, residues 220–227 (SLWNSYFL) are lumenal. Residues 228–247 (ASILRYTISLNVTWLVNSVA) traverse the membrane as a helical segment. Residue Trp-241 coordinates substrate. Fe cation-binding residues include His-248, His-277, His-280, and His-281. Over 248–335 (HMYGNRPYDK…RKARTGDGSA (88 aa)) the chain is Cytoplasmic. Residues 277-281 (HNYHH) carry the Histidine box-3 motif.

The protein belongs to the fatty acid desaturase type 1 family. In terms of assembly, may self-associate and form homodimers. The cofactor is Fe(2+). In terms of tissue distribution, detected in brain.

The protein resides in the endoplasmic reticulum membrane. The enzyme catalyses octadecanoyl-CoA + 2 Fe(II)-[cytochrome b5] + O2 + 2 H(+) = (9Z)-octadecenoyl-CoA + 2 Fe(III)-[cytochrome b5] + 2 H2O. It catalyses the reaction hexadecanoyl-CoA + 2 Fe(II)-[cytochrome b5] + O2 + 2 H(+) = (9Z)-hexadecenoyl-CoA + 2 Fe(III)-[cytochrome b5] + 2 H2O. In terms of biological role, stearoyl-CoA desaturase that utilizes O(2) and electrons from reduced cytochrome b5 to introduce the first double bond into saturated fatty acyl-CoA substrates. Catalyzes the insertion of a cis double bond at the delta-9 position into fatty acyl-CoA substrates including palmitoyl-CoA and stearoyl-CoA. Gives rise to a mixture of 16:1 and 18:1 unsaturated fatty acids. Involved in neuronal cell proliferation and differentiation through down-regulation of EGFR/AKT/MAPK and Wnt signaling pathways. The polypeptide is Stearoyl-CoA desaturase 5 (SCD5) (Bos taurus (Bovine)).